The following is a 241-amino-acid chain: Small ribosomal subunit protein uS2 (241 aa).

This sequence belongs to the universal ribosomal protein uS2 family.

The sequence is that of Small ribosomal subunit protein uS2 from Citrobacter koseri (strain ATCC BAA-895 / CDC 4225-83 / SGSC4696).